We begin with the raw amino-acid sequence, 295 residues long: bZIP transcription factor RISBZ5 (295 aa).

Over residues 16–26 (REEAGAGDRKP) the composition is skewed to basic and acidic residues. The tract at residues 16-157 (REEAGAGDRK…ARRSRRRKQA (142 aa)) is disordered. The segment covering 109-119 (SDSDSDCDSLL) has biased composition (acidic residues). Over residues 120–136 (EAERSPRLRGTKSTETK) the composition is skewed to basic and acidic residues. The bZIP domain occupies 134 to 197 (ETKRIRRMVS…NTAVTDNRIL (64 aa)). The basic motif stretch occupies residues 136-155 (KRIRRMVSNRESARRSRRRK). The interval 162–176 (LESQVEQLKGENSSL) is leucine-zipper.

As to quaternary structure, homodimer.

It localises to the nucleus. Its function is as follows. Probable transcription factor that binds to the DNA specific sequence 5'-TGAGTCA-3' found in seed storage protein gene promoters. May function as a negative regulator in cold and drought stress responses. The protein is bZIP transcription factor RISBZ5 of Oryza sativa subsp. japonica (Rice).